The following is a 557-amino-acid chain: Dihydroxy-acid dehydratase (557 aa).

Asp-78 is a Mg(2+) binding site. Cys-119 is a binding site for [2Fe-2S] cluster. Positions 120 and 121 each coordinate Mg(2+). An N6-carboxylysine modification is found at Lys-121. Cys-192 lines the [2Fe-2S] cluster pocket. Mg(2+) is bound at residue Glu-442. Catalysis depends on Ser-468, which acts as the Proton acceptor.

The protein belongs to the IlvD/Edd family. As to quaternary structure, homodimer. It depends on [2Fe-2S] cluster as a cofactor. Mg(2+) is required as a cofactor.

It catalyses the reaction (2R)-2,3-dihydroxy-3-methylbutanoate = 3-methyl-2-oxobutanoate + H2O. It carries out the reaction (2R,3R)-2,3-dihydroxy-3-methylpentanoate = (S)-3-methyl-2-oxopentanoate + H2O. The protein operates within amino-acid biosynthesis; L-isoleucine biosynthesis; L-isoleucine from 2-oxobutanoate: step 3/4. It participates in amino-acid biosynthesis; L-valine biosynthesis; L-valine from pyruvate: step 3/4. Functions in the biosynthesis of branched-chain amino acids. Catalyzes the dehydration of (2R,3R)-2,3-dihydroxy-3-methylpentanoate (2,3-dihydroxy-3-methylvalerate) into 2-oxo-3-methylpentanoate (2-oxo-3-methylvalerate) and of (2R)-2,3-dihydroxy-3-methylbutanoate (2,3-dihydroxyisovalerate) into 2-oxo-3-methylbutanoate (2-oxoisovalerate), the penultimate precursor to L-isoleucine and L-valine, respectively. This is Dihydroxy-acid dehydratase from Bacillus cereus (strain G9842).